The chain runs to 404 residues: Pectate lyase E (404 aa).

The N-terminal stretch at 1–41 (MNNSRMSSVSTQKTTGRSALGTKSALAAIIATTMMVSVASA) is a signal peptide. Ca(2+) contacts are provided by Asp-182 and Asp-225. Arg-278 is an active-site residue.

It belongs to the polysaccharide lyase 1 family. PLBC subfamily. Requires Ca(2+) as cofactor.

It localises to the secreted. The catalysed reaction is Eliminative cleavage of (1-&gt;4)-alpha-D-galacturonan to give oligosaccharides with 4-deoxy-alpha-D-galact-4-enuronosyl groups at their non-reducing ends.. The protein operates within glycan metabolism; pectin degradation; 2-dehydro-3-deoxy-D-gluconate from pectin: step 2/5. Its function is as follows. Involved in maceration and soft-rotting of plant tissue. Pectate lyases have been implicated as pathogenicity factors which induce maceration or rotting of plant tissue. PelE is sufficient to induce these effects under laboratory conditions. The sequence is that of Pectate lyase E (pelE) from Dickeya chrysanthemi (Pectobacterium chrysanthemi).